Reading from the N-terminus, the 130-residue chain is C-X-C motif chemokine 5 (130 aa).

The N-terminal stretch at 1–37 (MSFQLRSSARIPSRSCSSFTLLAFLLLFTLPQHRAQA) is a signal peptide. Intrachain disulfides connect cysteine 50–cysteine 76 and cysteine 52–cysteine 93.

It belongs to the intercrine alpha (chemokine CxC) family. In terms of assembly, monomer. Homodimer.

It localises to the secreted. Functionally, may participate in the recruitment of inflammatory cells by injured or infected tissue. The chain is C-X-C motif chemokine 5 (Cxcl5) from Rattus norvegicus (Rat).